The chain runs to 448 residues: RING finger protein 44 (448 aa).

The RING-type; atypical zinc finger occupies 396–437; the sequence is CVVCFSDFESRQLLRVLPCNHEFHAKCVDKWLKTNRTCPICR.

The protein is RING finger protein 44 (rnf44) of Danio rerio (Zebrafish).